The following is a 350-amino-acid chain: UDP-N-acetylenolpyruvoylglucosamine reductase (350 aa).

In terms of domain architecture, FAD-binding PCMH-type spans 24–195; sequence HVEATARWLL…VAVEFNLPLL (172 aa). Residue Arg172 is part of the active site. Residue Ser245 is the Proton donor of the active site. Glu342 is a catalytic residue.

It belongs to the MurB family. The cofactor is FAD.

The protein resides in the cytoplasm. It carries out the reaction UDP-N-acetyl-alpha-D-muramate + NADP(+) = UDP-N-acetyl-3-O-(1-carboxyvinyl)-alpha-D-glucosamine + NADPH + H(+). It functions in the pathway cell wall biogenesis; peptidoglycan biosynthesis. Cell wall formation. The chain is UDP-N-acetylenolpyruvoylglucosamine reductase from Xanthomonas euvesicatoria pv. vesicatoria (strain 85-10) (Xanthomonas campestris pv. vesicatoria).